A 260-amino-acid chain; its full sequence is HLA class II histocompatibility antigen, DP alpha 1 chain (260 aa).

An N-terminal signal peptide occupies residues 1-28 (MRPEDRMFHIRAVILRALSLAFLLSLRG). The tract at residues 29–115 (AGAIKADHVS…QRSNHTQATN (87 aa)) is alpha-1. The Extracellular segment spans residues 29 to 222 (AGAIKADHVS…EPIQMPETTE (194 aa)). N-linked (GlcNAc...) asparagine glycans are attached at residues N109 and N149. Residues 116 to 209 (DPPEVTVFPK…GLDQPLLKHW (94 aa)) are alpha-2. The 93-residue stretch at 118–210 (PEVTVFPKEP…LDQPLLKHWE (93 aa)) folds into the Ig-like C1-type domain. C138 and C194 are disulfide-bonded. Residues 210–222 (EAQEPIQMPETTE) form a connecting peptide region. A helical transmembrane segment spans residues 223-245 (TVLCALGLVLGLVGIIVGTVLII). At 246 to 260 (KSLRSGHDPRAQGTL) the chain is on the cytoplasmic side.

The protein belongs to the MHC class II family. In terms of assembly, heterodimer of an alpha and a beta subunit; also referred as MHC class II molecule. In the endoplasmic reticulum (ER) it forms a heterononamer; 3 MHC class II molecules bind to a CD74 homotrimer (also known as invariant chain or HLA class II histocompatibility antigen gamma chain). In the endosomal/lysosomal system; CD74 undergoes sequential degradation by various proteases; leaving a small fragment termed CLIP on each MHC class II molecule. MHC class II molecule interacts with HLA_DM, and HLA_DO in B-cells, in order to release CLIP and facilitate the binding of antigenic peptides.

It localises to the cell membrane. Its subcellular location is the endoplasmic reticulum membrane. It is found in the golgi apparatus. The protein resides in the trans-Golgi network membrane. The protein localises to the endosome membrane. It localises to the lysosome membrane. In terms of biological role, binds peptides derived from antigens that access the endocytic route of antigen presenting cells (APC) and presents them on the cell surface for recognition by the CD4 T-cells. The peptide binding cleft accommodates peptides of 10-30 residues. The peptides presented by MHC class II molecules are generated mostly by degradation of proteins that access the endocytic route, where they are processed by lysosomal proteases and other hydrolases. Exogenous antigens that have been endocytosed by the APC are thus readily available for presentation via MHC II molecules, and for this reason this antigen presentation pathway is usually referred to as exogenous. As membrane proteins on their way to degradation in lysosomes as part of their normal turn-over are also contained in the endosomal/lysosomal compartments, exogenous antigens must compete with those derived from endogenous components. Autophagy is also a source of endogenous peptides, autophagosomes constitutively fuse with MHC class II loading compartments. In addition to APCs, other cells of the gastrointestinal tract, such as epithelial cells, express MHC class II molecules and CD74 and act as APCs, which is an unusual trait of the GI tract. To produce a MHC class II molecule that presents an antigen, three MHC class II molecules (heterodimers of an alpha and a beta chain) associate with a CD74 trimer in the ER to form a heterononamer. Soon after the entry of this complex into the endosomal/lysosomal system where antigen processing occurs, CD74 undergoes a sequential degradation by various proteases, including CTSS and CTSL, leaving a small fragment termed CLIP (class-II-associated invariant chain peptide). The removal of CLIP is facilitated by HLA-DM via direct binding to the alpha-beta-CLIP complex so that CLIP is released. HLA-DM stabilizes MHC class II molecules until primary high affinity antigenic peptides are bound. The MHC II molecule bound to a peptide is then transported to the cell membrane surface. In B-cells, the interaction between HLA-DM and MHC class II molecules is regulated by HLA-DO. Primary dendritic cells (DCs) also to express HLA-DO. Lysosomal microenvironment has been implicated in the regulation of antigen loading into MHC II molecules, increased acidification produces increased proteolysis and efficient peptide loading. The polypeptide is HLA class II histocompatibility antigen, DP alpha 1 chain (HLA-DPA1) (Homo sapiens (Human)).